The chain runs to 346 residues: ATP-dependent 6-phosphofructokinase (346 aa).

ATP-binding positions include Gly-13, Arg-76–Leu-77, and Gly-106–Thr-109. Position 107 (Glu-107) interacts with Mg(2+). Residues Thr-129–Asp-131, Arg-166, Met-173–Arg-175, Glu-226, Arg-270, and His-276–Arg-279 each bind substrate. Catalysis depends on Asp-131, which acts as the Proton acceptor.

The protein belongs to the phosphofructokinase type A (PFKA) family. Mixed-substrate PFK group III subfamily. As to quaternary structure, homodimer or homotetramer. The cofactor is Mg(2+).

The protein resides in the cytoplasm. It carries out the reaction beta-D-fructose 6-phosphate + ATP = beta-D-fructose 1,6-bisphosphate + ADP + H(+). The protein operates within carbohydrate degradation; glycolysis; D-glyceraldehyde 3-phosphate and glycerone phosphate from D-glucose: step 3/4. Catalyzes the phosphorylation of D-fructose 6-phosphate to fructose 1,6-bisphosphate by ATP, the first committing step of glycolysis. In Corynebacterium efficiens (strain DSM 44549 / YS-314 / AJ 12310 / JCM 11189 / NBRC 100395), this protein is ATP-dependent 6-phosphofructokinase.